A 650-amino-acid polypeptide reads, in one-letter code: Acetyl-coenzyme A synthetase (650 aa).

CoA-binding positions include 190-193 (RGGR), T308, and N332. ATP is bound by residues 384 to 386 (GEP), 408 to 413 (DTWWQT), D497, and R512. Position 520 (S520) interacts with CoA. Position 523 (R523) interacts with ATP. The Mg(2+) site is built by V534, H536, and V539. A CoA-binding site is contributed by R581. K606 bears the N6-acetyllysine mark.

This sequence belongs to the ATP-dependent AMP-binding enzyme family. The cofactor is Mg(2+). In terms of processing, acetylated. Deacetylation by the SIR2-homolog deacetylase activates the enzyme.

It carries out the reaction acetate + ATP + CoA = acetyl-CoA + AMP + diphosphate. In terms of biological role, catalyzes the conversion of acetate into acetyl-CoA (AcCoA), an essential intermediate at the junction of anabolic and catabolic pathways. AcsA undergoes a two-step reaction. In the first half reaction, AcsA combines acetate with ATP to form acetyl-adenylate (AcAMP) intermediate. In the second half reaction, it can then transfer the acetyl group from AcAMP to the sulfhydryl group of CoA, forming the product AcCoA. The polypeptide is Acetyl-coenzyme A synthetase (Bradyrhizobium sp. (strain ORS 278)).